Here is a 221-residue protein sequence, read N- to C-terminus: UPF0502 protein XOO0224 (221 aa).

It belongs to the UPF0502 family.

This is UPF0502 protein XOO0224 from Xanthomonas oryzae pv. oryzae (strain MAFF 311018).